The chain runs to 49 residues: Chitin-binding lectin (49 aa).

The 44-residue stretch at 2–45 (DHRCGREATPPGKLCNDGRCCSQWGWCGTTQAYCSGKCQSQCDC) folds into the Chitin-binding type-1 domain. 4 disulfides stabilise this stretch: cysteine 5/cysteine 22, cysteine 16/cysteine 28, cysteine 21/cysteine 35, and cysteine 39/cysteine 43.

As to quaternary structure, homodimer; disulfide-linked.

In terms of biological role, chitin-binding lectin which is specific for N-acetylglucosamine oligomers. The polypeptide is Chitin-binding lectin (Viscum album (European mistletoe)).